We begin with the raw amino-acid sequence, 420 residues long: Phosphoribosylamine--glycine ligase (420 aa).

Residues 108–314 (KEIMVKYGVS…FAQNITDILD (207 aa)) enclose the ATP-grasp domain. Residue 134 to 195 (IEKHGAPIVV…EEFLEGEEFS (62 aa)) participates in ATP binding. Glutamate 284 and asparagine 286 together coordinate Mg(2+).

This sequence belongs to the GARS family. It depends on Mg(2+) as a cofactor. The cofactor is Mn(2+).

The enzyme catalyses 5-phospho-beta-D-ribosylamine + glycine + ATP = N(1)-(5-phospho-beta-D-ribosyl)glycinamide + ADP + phosphate + H(+). It participates in purine metabolism; IMP biosynthesis via de novo pathway; N(1)-(5-phospho-D-ribosyl)glycinamide from 5-phospho-alpha-D-ribose 1-diphosphate: step 2/2. The polypeptide is Phosphoribosylamine--glycine ligase (Streptococcus pneumoniae (strain ATCC BAA-255 / R6)).